Consider the following 263-residue polypeptide: Proliferating cell nuclear antigen (263 aa).

A DNA-binding region spans residues 61–80 (RCDRNLSMGMNLNNMAKMLR).

This sequence belongs to the PCNA family. As to quaternary structure, homotrimer. Interacts with FEN1A. Interacts with POLL. Interacts with RAD/GEN1. Interacts with DJA7 and DJA8. In terms of tissue distribution, expressed in proliferating tissues. Expressed in roots and root apex. Expressed at low levels in young leaves. Not detected in mature leaves. Highly expressed in shoot apical meristem (SAM). Expressed in flag leaves and panicles.

The protein resides in the nucleus. This protein is an auxiliary protein of DNA polymerase delta and is involved in the control of eukaryotic DNA replication by increasing the polymerase's processibility during elongation of the leading strand. The protein is Proliferating cell nuclear antigen of Oryza sativa subsp. japonica (Rice).